The primary structure comprises 283 residues: Pantothenate synthetase (283 aa).

34-41 (MGALHDGH) serves as a coordination point for ATP. The active-site Proton donor is His41. Position 65 (Gln65) interacts with (R)-pantoate. Gln65 is a binding site for beta-alanine. 152–155 (GEKD) lines the ATP pocket. (R)-pantoate is bound at residue Gln158. ATP is bound by residues Val181 and 189–192 (MSSR).

Belongs to the pantothenate synthetase family. Homodimer.

It is found in the cytoplasm. It carries out the reaction (R)-pantoate + beta-alanine + ATP = (R)-pantothenate + AMP + diphosphate + H(+). The protein operates within cofactor biosynthesis; (R)-pantothenate biosynthesis; (R)-pantothenate from (R)-pantoate and beta-alanine: step 1/1. Its function is as follows. Catalyzes the condensation of pantoate with beta-alanine in an ATP-dependent reaction via a pantoyl-adenylate intermediate. The chain is Pantothenate synthetase from Rhodopseudomonas palustris (strain BisB18).